The chain runs to 477 residues: MQVLHVCSEMFPLLKTGGLADVIGALPAVQIEDGVDARVLLPAFPDIRRGITDAQVVTRRDTFAGPITLLFGHYNGVGIYLIDAPHLYDRPGSPYHDTNLFAYTDNVIRFALLGWVGCEMACGLDPFWRPDVVHAHDWHAGLAPAYLAARGRPAKSVFTVHNLAYQGMFYAHHMDEIQLPWSFFNINGLEFNGQISFLKSGLYYADHITAVSPTYAREITEPQFAYGMEGLLQQRHREGRLSGVLNGVDEKIWSPETDLLLASRYTRDTLEEKAENKRQLQIAMGLKVDDKAPLFAVVSRLTSQKGLDLVLEALPGLLEQGGQLALLGAGDPVLQEGFLAAAAEHPGQVGVQIGYHEAFSHRIMGGADVILVPSRFEPCGLTQLYGLKYGTLPLVRRTGGLADTVSDSSLENLADGIASGFVFEDSNAWSLLRAIRRAFVLWSRPSLWRFVQRQAMSMDFSWHVAAKSYRELYYRLK.

K15 serves as a coordination point for ADP-alpha-D-glucose.

The protein belongs to the glycosyltransferase 1 family. Bacterial/plant glycogen synthase subfamily.

The catalysed reaction is [(1-&gt;4)-alpha-D-glucosyl](n) + ADP-alpha-D-glucose = [(1-&gt;4)-alpha-D-glucosyl](n+1) + ADP + H(+). The protein operates within glycan biosynthesis; glycogen biosynthesis. Synthesizes alpha-1,4-glucan chains using ADP-glucose. This is Glycogen synthase from Escherichia fergusonii (strain ATCC 35469 / DSM 13698 / CCUG 18766 / IAM 14443 / JCM 21226 / LMG 7866 / NBRC 102419 / NCTC 12128 / CDC 0568-73).